We begin with the raw amino-acid sequence, 800 residues long: DEP domain-containing protein 1A (800 aa).

One can recognise a DEP domain in the interval 24–108 (FRAGMPLKKH…DNSQLYRFPS (85 aa)). 3 disordered regions span residues 147–173 (ETLE…RSRE), 306–326 (SQPG…AKNP), and 459–485 (INTS…ARAR). Residues 281–321 (PLLTYQYYELFVNILVMCGYITTPKSQPGKRKNQEEPNCPQ) form the Rho-GAP domain. Residues 459–468 (INTSGSSVSS) are compositionally biased toward low complexity.

In Danio rerio (Zebrafish), this protein is DEP domain-containing protein 1A (depdc1a).